The sequence spans 139 residues: Large ribosomal subunit protein uL13 (139 aa).

It belongs to the universal ribosomal protein uL13 family. As to quaternary structure, part of the 50S ribosomal subunit.

Its function is as follows. This protein is one of the early assembly proteins of the 50S ribosomal subunit, although it is not seen to bind rRNA by itself. It is important during the early stages of 50S assembly. This is Large ribosomal subunit protein uL13 from Aliarcobacter butzleri (strain RM4018) (Arcobacter butzleri).